Here is a 448-residue protein sequence, read N- to C-terminus: Protein W (448 aa).

Disordered regions lie at residues 26–104 and 193–406; these read KTYG…DPDD and FVPK…KKGA. 2 stretches are compositionally biased toward polar residues: residues 28 to 37 and 77 to 96; these read YGRSSIQQPS and DLSS…SNTR. Positions 240 to 252 are enriched in acidic residues; sequence SDDEDENQLEYED. S257 bears the Phosphoserine; by host mark. The segment covering 296–317 has biased composition (basic and acidic residues); it reads FPEKEETPDVRRKDSLMQDSCK. S350 is modified (phosphoserine; by host).

The sequence is that of Protein W (P/V/C) from Hendra virus (isolate Horse/Autralia/Hendra/1994).